A 147-amino-acid polypeptide reads, in one-letter code: 3-dehydroquinate dehydratase (147 aa).

Tyr23 acts as the Proton acceptor in catalysis. Asn74, His80, and Asp87 together coordinate substrate. The Proton donor role is filled by His100. Substrate is bound by residues 101 to 102 (IS) and Arg111.

It belongs to the type-II 3-dehydroquinase family. Homododecamer.

The catalysed reaction is 3-dehydroquinate = 3-dehydroshikimate + H2O. It participates in metabolic intermediate biosynthesis; chorismate biosynthesis; chorismate from D-erythrose 4-phosphate and phosphoenolpyruvate: step 3/7. Catalyzes a trans-dehydration via an enolate intermediate. In Prochlorococcus marinus (strain MIT 9301), this protein is 3-dehydroquinate dehydratase.